The following is a 206-amino-acid chain: LexA repressor (206 aa).

Positions 28–48 (RAEIAKRLGFKSANAAEEHLK) form a DNA-binding region, H-T-H motif. Residues S123 and K160 each act as for autocatalytic cleavage activity in the active site.

The protein belongs to the peptidase S24 family. In terms of assembly, homodimer.

It catalyses the reaction Hydrolysis of Ala-|-Gly bond in repressor LexA.. Functionally, represses a number of genes involved in the response to DNA damage (SOS response), including recA and lexA. In the presence of single-stranded DNA, RecA interacts with LexA causing an autocatalytic cleavage which disrupts the DNA-binding part of LexA, leading to derepression of the SOS regulon and eventually DNA repair. In Shewanella sediminis (strain HAW-EB3), this protein is LexA repressor.